The following is a 910-amino-acid chain: E3 ubiquitin-protein ligase HUL5 (910 aa).

Met1 is subject to N-acetylmethionine. Residues 1 to 25 (MLNFTGQTRRRNVNLGNRTRNSKKD) form a disordered region. The region spanning 810-910 (YGGYKEEDQT…INSGARFDLS (101 aa)) is the HECT domain. Cys878 functions as the Glycyl thioester intermediate in the catalytic mechanism.

It belongs to the UBE3C family. In terms of assembly, interacts with 19S proteasomes.

The protein resides in the cytoplasm. It localises to the cytosol. Its subcellular location is the nucleus. The catalysed reaction is S-ubiquitinyl-[E2 ubiquitin-conjugating enzyme]-L-cysteine + [acceptor protein]-L-lysine = [E2 ubiquitin-conjugating enzyme]-L-cysteine + N(6)-ubiquitinyl-[acceptor protein]-L-lysine.. The protein operates within protein modification; protein ubiquitination. Its function is as follows. Non-essential E3 ubiquitin-protein ligase that specifically catalyzes 'Lys-29'- and 'Lys-48'-linked polyubiquitin chains. Accepts ubiquitin from an E2 ubiquitin-conjugating enzyme in the form of a thioester and then directly transfers the ubiquitin to targeted substrates. Associates with the proteasome and promotes elongation of ubiquitin chains on substrates bound to the proteasome. Elongation of ubiquitin chains on substrates bound to the proteasome promotes proteasomal processivity. Also promotes ubiquitin elongation of 26S proteasome subunit RPN10. Involved in the stress response required to maintain cell fitness following heat-shock: acts by mediating ubiquitination of cytosolic misfolded proteins, leading to their subsequent degradation. The chain is E3 ubiquitin-protein ligase HUL5 from Saccharomyces cerevisiae (strain ATCC 204508 / S288c) (Baker's yeast).